Here is a 260-residue protein sequence, read N- to C-terminus: CD40 ligand (260 aa).

The Cytoplasmic segment spans residues 1-22 (MIETYSQPSPRSVATGLPASMK). Residues 23–46 (IFMYLLTVFLITQMIGSVLFAVYL) traverse the membrane as a helical; Signal-anchor for type II membrane protein segment. The Extracellular segment spans residues 47–260 (HRRLDKVEEE…GFSSFGLLKL (214 aa)). Positions 121–260 (IAAHVVSEAN…GFSSFGLLKL (140 aa)) constitute a THD domain. The cysteines at positions 177 and 217 are disulfide-linked. A glycan (N-linked (GlcNAc...) asparagine) is linked at N239.

This sequence belongs to the tumor necrosis factor family. In terms of assembly, homotrimer. Interacts with CD28. CD40 ligand, soluble form: Exists as either a monomer or a homotrimer. Forms a ternary complex between CD40 and integrins for CD40-CD40LG signaling. Post-translationally, the soluble form derives from the membrane form by proteolytic processing. As to expression, specifically expressed on activated CD4+ T-lymphocytes.

Its subcellular location is the cell membrane. It is found in the cell surface. The protein resides in the secreted. Cytokine that acts as a ligand to CD40/TNFRSF5. Costimulates T-cell proliferation and cytokine production. Its cross-linking on T-cells generates a costimulatory signal which enhances the production of IL4 and IL10 in conjunction with the TCR/CD3 ligation and CD28 costimulation. Induces the activation of NF-kappa-B. Induces the activation of kinases MAPK8 and PAK2 in T-cells. Mediates B-cell proliferation in the absence of co-stimulus as well as IgE production in the presence of IL4. Involved in immunoglobulin class switching. In terms of biological role, acts as a ligand for integrins, specifically ITGA5:ITGB1 and ITGAV:ITGB3; both integrins and the CD40 receptor are required for activation of CD40-CD40LG signaling, which have cell-type dependent effects, such as B-cell activation, NF-kappa-B signaling and anti-apoptotic signaling. This chain is CD40 ligand (Cd40lg), found in Mus musculus (Mouse).